We begin with the raw amino-acid sequence, 66 residues long: Ocellatin-PT2 (66 aa).

The first 22 residues, 1–22, serve as a signal peptide directing secretion; it reads MAFLKKSLFLVLFLGLVSLSIC. A propeptide spanning residues 23–39 is cleaved from the precursor; that stretch reads DEEKRQDEDDDDDDDEE. Val66 is subject to Valine amide.

Expressed by the skin glands.

It localises to the secreted. Has no antibacterial activity against Gram-negative bacteria E.coli ATCC 25922, S.pneumoniae ATCC 700603 and S.choleraesuis ATCC 14028 or against Gram-positive bacterium S.aureus ATCC 29313. Shows no hemolytic activity and no cytotoxicity. In Leptodactylus pustulatus (Ceara white-lipped frog), this protein is Ocellatin-PT2.